A 516-amino-acid chain; its full sequence is Extracellular endo-inulinase inu2 (516 aa).

An N-terminal signal peptide occupies residues 1-23 (MLNPKVAYMVWMTCLGLTLPSQA). Substrate is bound by residues 41 to 43 (MNE) and Asn61. The active site involves Glu43. N-linked (GlcNAc...) asparagine glycans are attached at residues Asn108 and Asn109. A substrate-binding site is contributed by Asp176. N-linked (GlcNAc...) asparagine glycosylation occurs at Asn210. Position 320 (Asn320) interacts with substrate. Residue Asn372 is glycosylated (N-linked (GlcNAc...) asparagine).

Belongs to the glycosyl hydrolase 32 family.

It localises to the secreted. The catalysed reaction is Endohydrolysis of (2-&gt;1)-beta-D-fructosidic linkages in inulin.. Functionally, endo-inulinase involved in utilization of the plant storage polymer inulin, consisting of fructooligosaccharides with a degree of polymerization (DP) value from 2 to 60. The protein is Extracellular endo-inulinase inu2 (inu2) of Aspergillus ficuum.